A 473-amino-acid chain; its full sequence is Photosystem II CP43 reaction center protein (473 aa).

Residues 1 to 14 (MKTLYSLRRFYHVE) constitute a propeptide that is removed on maturation. Residue Thr-15 is modified to N-acetylthreonine. A Phosphothreonine modification is found at Thr-15. 5 helical membrane-spanning segments follow: residues 69-93 (LFEV…PHLA), 134-155 (LLGP…KDRN), 178-200 (KALY…RKIT), 255-275 (KPFA…LSYS), and 291-312 (WFNN…ASQA). Glu-367 contributes to the [CaMn4O5] cluster binding site. A helical membrane pass occupies residues 447-471 (RARAAAAGFEKGIDRDFEPVLSMTP).

It belongs to the PsbB/PsbC family. PsbC subfamily. As to quaternary structure, PSII is composed of 1 copy each of membrane proteins PsbA, PsbB, PsbC, PsbD, PsbE, PsbF, PsbH, PsbI, PsbJ, PsbK, PsbL, PsbM, PsbT, PsbX, PsbY, PsbZ, Psb30/Ycf12, at least 3 peripheral proteins of the oxygen-evolving complex and a large number of cofactors. It forms dimeric complexes. The cofactor is Binds multiple chlorophylls and provides some of the ligands for the Ca-4Mn-5O cluster of the oxygen-evolving complex. It may also provide a ligand for a Cl- that is required for oxygen evolution. PSII binds additional chlorophylls, carotenoids and specific lipids..

It is found in the plastid. The protein resides in the chloroplast thylakoid membrane. Its function is as follows. One of the components of the core complex of photosystem II (PSII). It binds chlorophyll and helps catalyze the primary light-induced photochemical processes of PSII. PSII is a light-driven water:plastoquinone oxidoreductase, using light energy to abstract electrons from H(2)O, generating O(2) and a proton gradient subsequently used for ATP formation. The polypeptide is Photosystem II CP43 reaction center protein (Draba nemorosa (Woodland whitlowgrass)).